Consider the following 357-residue polypeptide: Mitogen-activated protein kinase kinase SIPKK (357 aa).

Positions 70–330 (FEAVKVIGKG…ANELMRHPFI (261 aa)) constitute a Protein kinase domain. Residues 76-84 (IGKGNGGIV) and lysine 99 contribute to the ATP site. The active-site Proton acceptor is the aspartate 192.

Belongs to the protein kinase superfamily. STE Ser/Thr protein kinase family. MAP kinase kinase subfamily. Interacts with SIPK.

The catalysed reaction is L-tyrosyl-[protein] + ATP = O-phospho-L-tyrosyl-[protein] + ADP + H(+). It carries out the reaction L-seryl-[protein] + ATP = O-phospho-L-seryl-[protein] + ADP + H(+). The enzyme catalyses L-threonyl-[protein] + ATP = O-phospho-L-threonyl-[protein] + ADP + H(+). Its function is as follows. Phosphorylates myelin basic protein (MBP) in vitro. May be involved in disease resistance. The polypeptide is Mitogen-activated protein kinase kinase SIPKK (Nicotiana tabacum (Common tobacco)).